Reading from the N-terminus, the 694-residue chain is Elongation factor G (694 aa).

The 275-residue stretch at 8-282 (DRLRNIGIMA…AIVDYLPSPL (275 aa)) folds into the tr-type G domain. Residues 17–24 (AHIDAGKT), 81–85 (DTPGH), and 135–138 (NKMD) each bind GTP. The disordered stretch occupies residues 284-303 (IPPVQGTDPETGEPAERKAD).

Belongs to the TRAFAC class translation factor GTPase superfamily. Classic translation factor GTPase family. EF-G/EF-2 subfamily.

The protein resides in the cytoplasm. Its function is as follows. Catalyzes the GTP-dependent ribosomal translocation step during translation elongation. During this step, the ribosome changes from the pre-translocational (PRE) to the post-translocational (POST) state as the newly formed A-site-bound peptidyl-tRNA and P-site-bound deacylated tRNA move to the P and E sites, respectively. Catalyzes the coordinated movement of the two tRNA molecules, the mRNA and conformational changes in the ribosome. In Symbiobacterium thermophilum (strain DSM 24528 / JCM 14929 / IAM 14863 / T), this protein is Elongation factor G.